The following is a 76-amino-acid chain: Large ribosomal subunit protein bL31 (76 aa).

This sequence belongs to the bacterial ribosomal protein bL31 family. Type A subfamily. Part of the 50S ribosomal subunit.

Its function is as follows. Binds the 23S rRNA. This Beijerinckia indica subsp. indica (strain ATCC 9039 / DSM 1715 / NCIMB 8712) protein is Large ribosomal subunit protein bL31.